Here is a 663-residue protein sequence, read N- to C-terminus: MAAKEKLEAVLNVALRVPSIMLLDVLYRWDVSSFFQQIQRSSLNNNPLFQYKYLALNMHYVGYILSVVLLTLPRQHLVQLYLYFVTALLLYAGHQISRDYVRSELESAYEGPMYLEPLSMNRFTTALIGQLVVCTLCSCVMKTKQIWLFSAHMLPLLARLCLVPLETIVIINKFAMIFTGLEVLYFLGSNLLVPYNLAKSAYRELVQVVEVYGLLALGMSLWNQLVVPVLFMVFWLVLFALQIYSYFSTRDQPASRERLLFLFLTSIAECCSTPYSLLGLVFTVSFVALGVLTLCKFYLQGYRAFMNDPAMNRGMTEGVTLLILAVQTGLIELQVVHRAFLLSIILFIVVASILQSMLEIADPIVLALGASRDKSLWKHFRAVSLCLFLLVFPAYMAYMICQFFHMDFWLLIIISSSILTSLQVLGTLFIYVLFMVEEFRKEPVENMDDVIYYVNGTYRLLEFVVALCVVAYGVSETIFGEWTVMGSMIIFIHSYYNVWLRAQLGWKSFLLRRDAVNKIKSLPVATQEQLEKHNDICAICYQDMKSAVITPCSHFFHAGCLKKWLYVQDTCPLCHCHLKNSSQLPGLGTEAAPQPPAGAEQNIVLQEGPEPPDHESPPGTGTQEGSGDSSEHINRGSASQEGAADAGEGPQIPEGEVCPVESA.

Transmembrane regions (helical) follow at residues 53-73 (YLALNMHYVGYILSVVLLTLP), 77-97 (LVQLYLYFVTALLLYAGHQIS), 123-143 (FTTALIGQLVVCTLCSCVMKT), 146-166 (IWLFSAHMLPLLARLCLVPLE), 168-188 (IVIINKFAMIFTGLEVLYFLG), 205-222 (LVQVVEVYGLLALGMSLW), 225-245 (LVVPVLFMVFWLVLFALQIYS), 275-295 (YSLLGLVFTVSFVALGVLTLC), 316-336 (TEGVTLLILAVQTGLIELQVV), 340-360 (FLLSIILFIVVASILQSMLEI), 384-404 (SLCLFLLVFPAYMAYMICQFF), 410-430 (LLIIISSSILTSLQVLGTLFI), 460-480 (LLEFVVALCVVAYGVSETIFG), and 482-502 (WTVMGSMIIFIHSYYNVWLRA). Residues 81–84 (YLYF) carry the YLYF motif motif. The active site involves Cys-537. The RING-type; atypical zinc finger occupies 537–575 (CAICYQDMKSAVITPCSHFFHAGCLKKWLYVQDTCPLCH). The tract at residues 587-663 (LGTEAAPQPP…EGEVCPVESA (77 aa)) is disordered. Over residues 619–628 (GTGTQEGSGD) the composition is skewed to polar residues.

As to quaternary structure, interacts (via YLYF motif) with INSIG1 and INSIG2.

The protein localises to the endoplasmic reticulum membrane. The catalysed reaction is S-ubiquitinyl-[E2 ubiquitin-conjugating enzyme]-L-cysteine + [acceptor protein]-L-lysine = [E2 ubiquitin-conjugating enzyme]-L-cysteine + N(6)-ubiquitinyl-[acceptor protein]-L-lysine.. E3 ubiquitin ligase that catalyzes the direct transfer of ubiquitin from E2 ubiquitin-conjugating enzyme to a specific substrate. In response to bacterial infection, negatively regulates the phagocyte oxidative burst by controlling the turnover of the NADPH oxidase complex subunits. Promotes monoubiquitination of CYBA and 'Lys-48'-linked polyubiquitination and degradation of CYBB NADPH oxidase catalytic subunits, both essential for the generation of antimicrobial reactive oxygen species. Involved in the maintenance of cholesterol homeostasis. In response to high sterol concentrations ubiquitinates HMGCR, a rate-limiting enzyme in cholesterol biosynthesis, and targets it for degradation. The interaction with INSIG1 is required for this function. In addition, triggers ubiquitination of SCAP, likely inhibiting its transport to the Golgi apparatus and the subsequent processing/maturation of SREBPF2, ultimately down-regulating cholesterol biosynthesis. The chain is RING finger protein 145 from Mus musculus (Mouse).